A 151-amino-acid chain; its full sequence is Aspartate carbamoyltransferase regulatory chain (151 aa).

Zn(2+) is bound by residues Cys107, Cys112, Cys135, and Cys138.

The protein belongs to the PyrI family. In terms of assembly, contains catalytic and regulatory chains. It depends on Zn(2+) as a cofactor.

Functionally, involved in allosteric regulation of aspartate carbamoyltransferase. This chain is Aspartate carbamoyltransferase regulatory chain, found in Thermococcus onnurineus (strain NA1).